Consider the following 397-residue polypeptide: E3 ubiquitin-protein ligase RNF149 (397 aa).

The first 20 residues, 1–20 (MLRWLCLYSALCALTHGSSA), serve as a signal peptide directing secretion. Residues 39–49 (TNSSVTGSTES) show a composition bias toward polar residues. The segment at 39-60 (TNSSVTGSTESGRYGDSSPKES) is disordered. Residues N40 and N140 are each glycosylated (N-linked (GlcNAc...) asparagine). Positions 83-170 (YIVPGTSAAA…PKGMEIMEPL (88 aa)) constitute a PA domain. The helical transmembrane segment at 196-216 (VVFVAIAFITMMIISLAWLIF) threads the bilayer. N-linked (GlcNAc...) asparagine glycosylation occurs at N231. The segment at 264–305 (CAVCIENYKTKDLVRILPCKHIFHRLCIDPWLIEHRTCPMCK) adopts an RING-type; atypical zinc-finger fold. The interval 341–397 (SITQEESRSEGNNLPSSSTGSSLQQSNSVKDDAGETTALLDDPGNDNAAATHTQDSH) is disordered. Low complexity predominate over residues 351–368 (GNNLPSSSTGSSLQQSNS). Residues 388 to 397 (AAATHTQDSH) are compositionally biased toward polar residues.

It localises to the membrane. The catalysed reaction is S-ubiquitinyl-[E2 ubiquitin-conjugating enzyme]-L-cysteine + [acceptor protein]-L-lysine = [E2 ubiquitin-conjugating enzyme]-L-cysteine + N(6)-ubiquitinyl-[acceptor protein]-L-lysine.. It participates in protein modification; protein ubiquitination. E3 ubiquitin-protein ligase. Ubiquitinates BRAF, inducing its proteasomal degradation. The polypeptide is E3 ubiquitin-protein ligase RNF149 (rnf149) (Xenopus laevis (African clawed frog)).